Reading from the N-terminus, the 523-residue chain is Transmembrane protein 266 (523 aa).

Over 1-94 (MTNPQPAIEG…VFLLSASLNS (94 aa)) the chain is Cytoplasmic. Residues 95 to 115 (FLVACVILVVILLTLELLIDI) form a helical membrane-spanning segment. The Extracellular segment spans residues 116 to 121 (KLLQFS). A helical membrane pass occupies residues 122 to 142 (SAFQFAGVIHWISLVILSVFF). Residues 143-161 (SETVLRIVVLGIWDYIENK) are Cytoplasmic-facing. The helical transmembrane segment at 162-182 (IEVFDGAVIILSLAPMVASTV) threads the bilayer. Residues 183–191 (ANGPRSPWD) lie on the Extracellular side of the membrane. A helical transmembrane segment spans residues 192 to 212 (AISLIIMLRIWRVKRVIDAYV). Residues 213 to 523 (LPVKLEMEMV…EQKLHRVPEA (311 aa)) are Cytoplasmic-facing. Positions 218-270 (EMEMVIQQYEKAKVIQDEQLERLTQICQEQGFEIRQLRAHLAQQDLDLAAERE) form a coiled coil. The interval 380–477 (SASRSSVTRA…PELEHRVSLF (98 aa)) is disordered. The segment covering 382–397 (SRSSVTRAQSDSSQTL) has biased composition (low complexity). A compositionally biased stretch (polar residues) spans 398–411 (GSSMDCSTAREEPS). The span at 421 to 430 (LPSQQQVEEA) shows a compositional bias: pro residues.

Homodimer; disulfide-linked. As to expression, mainly expressed in the cerebellum. Also expressed in cerebral cortex, skeletal muscle and thyroid, but at much lower levels.

Its subcellular location is the cell membrane. It is found in the cell projection. The protein localises to the dendrite. The protein resides in the perikaryon. Its function is as follows. Voltage-sensor protein present on the post-synaptic side of glutamatergic mossy fibers and granule cells in the cerebellum. Despite the presence of a voltage-sensor segment, does not form a functional ion channel and its precise role remains unclear. Undergoes both rapid and slow structural rearrangements in response to changes in voltage. Contains a zinc-binding site that can regulate the slow conformational transition. The protein is Transmembrane protein 266 of Homo sapiens (Human).